Consider the following 208-residue polypeptide: dTTP/UTP pyrophosphatase (208 aa).

The disordered stretch occupies residues 28–48 (DRIHPADIDETPQRAEHPRSL). Residue Asp-79 is the Proton acceptor of the active site.

This sequence belongs to the Maf family. YhdE subfamily. The cofactor is a divalent metal cation.

The protein localises to the cytoplasm. It catalyses the reaction dTTP + H2O = dTMP + diphosphate + H(+). It carries out the reaction UTP + H2O = UMP + diphosphate + H(+). Nucleoside triphosphate pyrophosphatase that hydrolyzes dTTP and UTP. May have a dual role in cell division arrest and in preventing the incorporation of modified nucleotides into cellular nucleic acids. The protein is dTTP/UTP pyrophosphatase of Brucella abortus (strain 2308).